The sequence spans 260 residues: Adenosylcobinamide-GDP ribazoletransferase (260 aa).

A run of 7 helical transmembrane segments spans residues 42–62 (TWAL…VYKI), 68–88 (LTPN…TGAL), 118–137 (IGTY…WSAL), 144–166 (WLVT…AFMS), 180–200 (AGAP…LVLT), 201–221 (LALG…AGLI), and 237–257 (ILGA…AAFQ).

Belongs to the CobS family. Mg(2+) serves as cofactor.

The protein resides in the cell inner membrane. It catalyses the reaction alpha-ribazole + adenosylcob(III)inamide-GDP = adenosylcob(III)alamin + GMP + H(+). The catalysed reaction is alpha-ribazole 5'-phosphate + adenosylcob(III)inamide-GDP = adenosylcob(III)alamin 5'-phosphate + GMP + H(+). It participates in cofactor biosynthesis; adenosylcobalamin biosynthesis; adenosylcobalamin from cob(II)yrinate a,c-diamide: step 7/7. In terms of biological role, joins adenosylcobinamide-GDP and alpha-ribazole to generate adenosylcobalamin (Ado-cobalamin). Also synthesizes adenosylcobalamin 5'-phosphate from adenosylcobinamide-GDP and alpha-ribazole 5'-phosphate. This is Adenosylcobinamide-GDP ribazoletransferase from Bradyrhizobium diazoefficiens (strain JCM 10833 / BCRC 13528 / IAM 13628 / NBRC 14792 / USDA 110).